The sequence spans 1240 residues: MEASQGLAEVETLSPQLAESYLRYVQEAKEAAKNGDLEESLKLFNLAKDIFPTKKVMSRIQKLQEALEQLAEEEDDDEFIDVCSSGLLLYRELYEKLFEHQKEGIAFLYSLYKDGRKGGILADDMGLGKTVQIIAFLSGMFDASLVNHVLLIMPTNLINTWVNEFAKWTPGMRVKTFHGSSKSERTRSLTRIQQRNGVVITTYQMLLNNWQQLASFNGQAFVWDYVILDEAHKIKSASTKSAVCARAIPASNRLLLTGTPVQNNLQELWSLFDFACQGSLLGTLKTFKMEYEHPIIRAREKDATPGEKALGLKISENLMEIIKPYFLRRTKEEVQTKKADNPEARLGEKNPAGEAICDMFSLARKNDLIVWIRLLPLQEEIYRKFVSLDHIKELLMETRSPLAELGVLKKLCDHPRLLSARACRLLNLGTATFSAQDENEQEDVSNMNSIDHLPDKTLIQESGKMIFLMSLLERLQDEGHQTLVFSQSIKILNIIERLLKNKHFKTLRIDGTVTHLWEREKRIQLFQQNKEYSVFLLTTQVGGVGLTLTAATRVVIFDPSWNPATDAQAVDRVYRIGQKENVVVYRLITCGTVEEKIYRRQVFKDSLIRQTTGEKKNPFRYFTKQELKELFTVGDLQKSATQMQLQCLHAAQRRSDEKLDEHIAYLHLLGIAGISDHDLMFTRDLSVKEELDMLEDSQYIHQRVQKAQFLVESESQNTVQRQTTGIEETWLKAQEFPSQQKKKGTEFNKPQPQPSRLLTKPTQVEAISSQMASITICDQSAESEPQEHSEVHDVTSLQGSHHFNSTSDAGTIASLPQGAESIGEVSTDSLLSPAKGFAAENDAMQKKGLQASPGQEAPSENLGSFHYLPRESSKASLGPNLDLQDSVVLYHRSPTANENQNLESDVPMIEISDDLSEPPSALQGAQAIEAQLELKEDDPLKSPPQYACDFNLFLEDSADTRQNLSSKFLEHVEKEKSLQSPAANSRAKSALTLSLDSSPKSDEESEVISVKTKSKTRRILSDDEDEDEEDAFKGSHTNSINISPFPFSSVKQFDASTPQSGSNPSRRFFSPKTPGEVNTSLHSRRSLASRRSLINVVLDDVEDMEERLDNSSEEESEPGLSEENNEEEALACTEEQPSGATLASGNKSSNLTMSEPTSPAPQSSPCAPEPSSSDPMPDPPQDLAVEAGNDYESLVARGKELKECGKIQEALNCLVKALDIKSADPEVMLMTLSLYKQLNI.

Ser-14 is subject to Phosphoserine. The stretch at 21–54 is one TPR 1 repeat; it reads YLRYVQEAKEAAKNGDLEESLKLFNLAKDIFPTK. The region spanning 110-278 is the Helicase ATP-binding domain; it reads SLYKDGRKGG…WSLFDFACQG (169 aa). Position 123–130 (123–130) interacts with ATP; that stretch reads DDMGLGKT. The short motif at 229-232 is the DEAH box element; that stretch reads DEAH. Positions 467 to 631 constitute a Helicase C-terminal domain; sequence FLMSLLERLQ…FTKQELKELF (165 aa). The interval 736-760 is disordered; it reads FPSQQKKKGTEFNKPQPQPSRLLTK. Residues 748–760 are compositionally biased toward polar residues; the sequence is NKPQPQPSRLLTK. Residues Ser-755 and Ser-773 each carry the phosphoserine modification. The interval 778–813 is disordered; sequence DQSAESEPQEHSEVHDVTSLQGSHHFNSTSDAGTIA. The segment covering 795–809 has biased composition (polar residues); that stretch reads TSLQGSHHFNSTSDA. Ser-821 bears the Phosphoserine mark. Residues 845–879 are disordered; that stretch reads QKKGLQASPGQEAPSENLGSFHYLPRESSKASLGP. Ser-966, Ser-998, Ser-1001, and Ser-1021 each carry phosphoserine. The tract at residues 974 to 1085 is disordered; the sequence is KEKSLQSPAA…EVNTSLHSRR (112 aa). The span at 978–998 shows a compositional bias: polar residues; it reads LQSPAANSRAKSALTLSLDSS. Positions 1049–1065 are enriched in polar residues; sequence SVKQFDASTPQSGSNPS. Thr-1057 carries the phosphothreonine modification. Phosphoserine occurs at positions 1092 and 1112. Positions 1104 to 1117 are enriched in acidic residues; it reads MEERLDNSSEEESE. The segment at 1104–1185 is disordered; the sequence is MEERLDNSSE…MPDPPQDLAV (82 aa). A compositionally biased stretch (polar residues) spans 1135–1165; the sequence is EQPSGATLASGNKSSNLTMSEPTSPAPQSSP. Phosphoserine is present on Ser-1172. One copy of the TPR 2 repeat lies at 1191–1224; that stretch reads YESLVARGKELKECGKIQEALNCLVKALDIKSAD.

It belongs to the SNF2/RAD54 helicase family. In terms of assembly, interacts with PLK1, which phosphorylates it. Both proteins are mutually dependent on each other for correct subcellular localization. Interacts (via N-terminal TPR repeat) with BEND3 (via BEN domains 1 and 3); the interaction is direct. Post-translationally, phosphorylation by PLK1 prevents the association with chromosome arms and restricts its localization to the kinetochore-centromere region. Expressed mainly in the neural tube and heart of 10.5 dpc embryo. Significantly down-regulated after alcohol exposure in embryonic brain and heart, but not in embryonic kidney, liver, or lung.

It is found in the chromosome. It localises to the centromere. The protein localises to the kinetochore. It carries out the reaction ATP + H2O = ADP + phosphate + H(+). Its function is as follows. DNA helicase that acts as a tension sensor that associates with catenated DNA which is stretched under tension until it is resolved during anaphase. Functions as ATP-dependent DNA translocase. Can promote Holliday junction branch migration (in vitro). In Mus musculus (Mouse), this protein is DNA excision repair protein ERCC-6-like (Ercc6l).